A 99-amino-acid polypeptide reads, in one-letter code: Small ribosomal subunit protein bS20 (99 aa).

Belongs to the bacterial ribosomal protein bS20 family.

In terms of biological role, binds directly to 16S ribosomal RNA. This Thermomicrobium roseum (strain ATCC 27502 / DSM 5159 / P-2) protein is Small ribosomal subunit protein bS20.